The following is a 227-amino-acid chain: Octanoyltransferase (227 aa).

The BPL/LPL catalytic domain maps to 47–223 (EDTADEIWLL…HLLRLLPPGV (177 aa)). Substrate-binding positions include 87–94 (RGGQITYH), 154–156 (ALG), and 167–169 (GLA). Cysteine 185 (acyl-thioester intermediate) is an active-site residue.

This sequence belongs to the LipB family.

It is found in the cytoplasm. The enzyme catalyses octanoyl-[ACP] + L-lysyl-[protein] = N(6)-octanoyl-L-lysyl-[protein] + holo-[ACP] + H(+). It functions in the pathway protein modification; protein lipoylation via endogenous pathway; protein N(6)-(lipoyl)lysine from octanoyl-[acyl-carrier-protein]: step 1/2. Catalyzes the transfer of endogenously produced octanoic acid from octanoyl-acyl-carrier-protein onto the lipoyl domains of lipoate-dependent enzymes. Lipoyl-ACP can also act as a substrate although octanoyl-ACP is likely to be the physiological substrate. This Azoarcus sp. (strain BH72) protein is Octanoyltransferase.